Consider the following 833-residue polypeptide: Disintegrin and metalloproteinase domain-containing protein 17 (833 aa).

Positions 1–17 (MRQCALFLTSLVPIVLA) are cleaved as a signal peptide. Positions 223 to 474 (NTCKLLVVAD…KAQECFQERS (252 aa)) constitute a Peptidase M12B domain. Residues 301 to 345 (AKSYPNEEKDAWDVKMLLEQFSFDIAEEASKVCLAHLFTYQDFDM) are interaction with classical swine fever virus envelope glycoprotein E2. 3 cysteine pairs are disulfide-bonded: Cys-365-Cys-469, Cys-423-Cys-453, and Cys-534-Cys-555. Residue His-405 participates in Zn(2+) binding. The active site involves Glu-406. Zn(2+)-binding residues include His-409 and His-415. A Disintegrin domain is found at 475-563 (NKVCGNSRVD…ECPPPGNAED (89 aa)). Residues 672–692 (IVGSVLVFSLMLWIPVSILVH) form a helical membrane-spanning segment. 2 disordered regions span residues 735–760 (TPGRLQPLQPLQPGPVLPSAPSVPVA) and 772–833 (QEDP…ETEC). Composition is skewed to basic and acidic residues over residues 777-790 (TDSHVDEDGFEKDP), 800-816 (SFEDLTDHPVTRSEKAS), and 824-833 (SRVDSKETEC).

In terms of assembly, (Microbial infection) Interacts (via metalloproteinase domain) with classical swine fever virus envelope glycoprotein E2; this interaction allows binding and probably entry of the virus into the cell. Interacts with MAD2L1, MAPK14 and MUC1. Interacts with iRhom1/RHBDF1 and iRhom2/RHBDF2. Interacts with FRMD8 via its interaction with iRhom1/RHBDF1 and iRhom2/RHBDF2. Requires Zn(2+) as cofactor. Post-translationally, the precursor is cleaved by a furin endopeptidase. In terms of processing, phosphorylated.

The protein localises to the membrane. The enzyme catalyses Narrow endopeptidase specificity. Cleaves Pro-Leu-Ala-Gln-Ala-|-Val-Arg-Ser-Ser-Ser in the membrane-bound, 26-kDa form of tumor necrosis factor alpha (TNFalpha). Similarly cleaves other membrane-anchored, cell-surface proteins to 'shed' the extracellular domains.. In terms of biological role, transmembrane metalloprotease which mediates the ectodomain shedding of a myriad of transmembrane proteins including adhesion proteins, growth factor precursors and cytokines important for inflammation and immunity. Cleaves the membrane-bound precursor of TNF-alpha to its mature soluble form. Responsible for the proteolytical release of soluble JAM3 from endothelial cells surface. Responsible for the proteolytic release of several other cell-surface proteins, including p75 TNF-receptor, interleukin 1 receptor type II, p55 TNF-receptor, transforming growth factor-alpha, L-selectin, growth hormone receptor, MUC1 and the amyloid precursor protein. Acts as an activator of Notch pathway by mediating cleavage of Notch, generating the membrane-associated intermediate fragment called Notch extracellular truncation (NEXT). Plays a role in the proteolytic processing of ACE2. Plays a role in hemostasis through shedding of GP1BA, the platelet glycoprotein Ib alpha chain. Mediates the proteolytic cleavage of LAG3, leading to release the secreted form of LAG3. Mediates the proteolytic cleavage of IL6R, leading to the release of secreted form of IL6R. Mediates the proteolytic cleavage and shedding of FCGR3A upon NK cell stimulation, a mechanism that allows for increased NK cell motility and detachment from opsonized target cells. Cleaves TREM2, resulting in shedding of the TREM2 ectodomain. Its function is as follows. (Microbial infection) Acts as a receptor for classical swine fever virus. The protein is Disintegrin and metalloproteinase domain-containing protein 17 (ADAM17) of Sus scrofa (Pig).